We begin with the raw amino-acid sequence, 72 residues long: Translation initiation factor IF-1 (72 aa).

Residues 1–72 form the S1-like domain; that stretch reads MAKEDNIEMQ…SKGRIVFRSR (72 aa).

The protein belongs to the IF-1 family. As to quaternary structure, component of the 30S ribosomal translation pre-initiation complex which assembles on the 30S ribosome in the order IF-2 and IF-3, IF-1 and N-formylmethionyl-tRNA(fMet); mRNA recruitment can occur at any time during PIC assembly.

The protein resides in the cytoplasm. Its function is as follows. One of the essential components for the initiation of protein synthesis. Stabilizes the binding of IF-2 and IF-3 on the 30S subunit to which N-formylmethionyl-tRNA(fMet) subsequently binds. Helps modulate mRNA selection, yielding the 30S pre-initiation complex (PIC). Upon addition of the 50S ribosomal subunit IF-1, IF-2 and IF-3 are released leaving the mature 70S translation initiation complex. The chain is Translation initiation factor IF-1 from Sodalis glossinidius (strain morsitans).